We begin with the raw amino-acid sequence, 244 residues long: MAQWWLILLGLWTVLPSLAGGKLLNVCMNSKHHKQEPGPEDKLYFECMPWKDNACCTRDTSWEAHLDEPLLFNFSMTHCGLLTPLCHKHFIQAICFYECSPNLGPWIQPVVPNRQEEQRLWDVPLCLEDCEEWWKDCRTSHTCKADWLHGWVWDQGKNGCPAHAPCLPFSDYFPTPADLCEKIWNNTFKASPERRNSGRCLQKWFEPTHGNPNVEVALHFAGSASAPQLSYSITAFSLCLLLHA.

An N-terminal signal peptide occupies residues 1–19 (MAQWWLILLGLWTVLPSLA). 8 disulfide bridges follow: C27-C55, C47-C95, C56-C99, C79-C166, C86-C137, C126-C200, C130-C180, and C143-C160. Positions 62-81 (WEAHLDEPLLFNFSMTHCGL) are important for interaction with IZUMO1. N-linked (GlcNAc...) asparagine glycosylation occurs at N73. A propeptide spanning residues 223–244 (SASAPQLSYSITAFSLCLLLHA) is cleaved from the precursor.

This sequence belongs to the folate receptor family. As to quaternary structure, monomer. Interacts with IZUMO1; the interaction is direct. IZUMO1 and IZUMO1R/JUNO form a complex with 1:1 stoichiometry. Interacts with FCRL3/MAIA; FCRL3/MAIA replaces IZUMO1R/JUNO as IZUMO1 receptor after sperm-egg adhesion, thereby permitting species-specific gamete fusion. Interacts with WDR54. In terms of processing, the protein is rapidly cleaved following fertilization, being only weakly detectable in zona-intact fertilized eggs at telophase II and undetectable at the pronuclear stage. Sheding is probably required to block to polyspermy and ensuring egg fusion with a single sperm. In terms of tissue distribution, expressed in the oocyte (at protein level).

Its subcellular location is the cell membrane. It is found in the cell projection. It localises to the microvillus membrane. In terms of biological role, receptor for IZUMO1 present at the cell surface of oocytes (oolemma), which is essential for species-specific gamete recognition and fertilization. The IZUMO1:IZUMO1R/JUNO interaction is a necessary adhesion event between sperm and egg that is required for fertilization but is not sufficient for cell fusion. The ligand-receptor interaction probably does not act as a membrane 'fusogen'. Does not bind folate. This Rattus norvegicus (Rat) protein is Sperm-egg fusion protein Juno (Izumo1r).